Here is a 1437-residue protein sequence, read N- to C-terminus: DNA polymerase III PolC-type (1437 aa).

The region spanning 420-576 (YVIFDVETTG…YDSETTGHLC (157 aa)) is the Exonuclease domain.

It belongs to the DNA polymerase type-C family. PolC subfamily.

Its subcellular location is the cytoplasm. The catalysed reaction is DNA(n) + a 2'-deoxyribonucleoside 5'-triphosphate = DNA(n+1) + diphosphate. Functionally, required for replicative DNA synthesis. This DNA polymerase also exhibits 3' to 5' exonuclease activity. This chain is DNA polymerase III PolC-type, found in Pediococcus pentosaceus (strain ATCC 25745 / CCUG 21536 / LMG 10740 / 183-1w).